The chain runs to 330 residues: Ribosomal RNA large subunit methyltransferase F (330 aa).

This sequence belongs to the methyltransferase superfamily. METTL16/RlmF family.

It is found in the cytoplasm. It carries out the reaction adenosine(1618) in 23S rRNA + S-adenosyl-L-methionine = N(6)-methyladenosine(1618) in 23S rRNA + S-adenosyl-L-homocysteine + H(+). Its function is as follows. Specifically methylates the adenine in position 1618 of 23S rRNA. This Pseudoalteromonas atlantica (strain T6c / ATCC BAA-1087) protein is Ribosomal RNA large subunit methyltransferase F.